Consider the following 302-residue polypeptide: Tegument protein VP22 (302 aa).

The span at 1–10 shows a compositional bias: basic and acidic residues; the sequence is MASSDGDRLC. Disordered regions lie at residues 1–42 and 125–170; these read MASS…PDDS and SFTK…SSWC. The interval 154–244 is interaction with gE; the sequence is RPISFSTAPK…ANEADLGEGA (91 aa). Polar residues predominate over residues 157-170; the sequence is SFSTAPKTATSSWC. The short motif at 212 to 224 is the Nuclear export signal element; the sequence is LDRLLTGAVIRIT. Residues 243–302 are disordered; it reads GASVSKRGHNRKTGDLQGGMGNEPMYAQVRKPKSRTDTQTTGRITNRSRARSASRTDTRK.

It belongs to the alphaherpesvirinae VP22 tegument protein family. As to quaternary structure, interacts with gE (via C-terminus); this interaction is necessary for the recruitment of VP22/ORF9 to the Golgi and its packaging into virions. Interacts with gM (via C-terminus). Interacts with VP16/ORF10; this interaction allows the formation of a tripartite complex composed of VP16/ORF10, VP22/ORF9 and VHS/ORF17. Interacts with the capsid-binding protein ORF44. Interacts with host CGAS. Highly phosphorylated in the host cell. Packaging is selective for underphosphorylated forms.

It is found in the virion tegument. The protein localises to the host cytoplasm. Its subcellular location is the host nucleus. The protein resides in the host Golgi apparatus. In terms of biological role, tegument protein that plays different roles during the time course of infection. Participates in both the accumulation of viral mRNAs and viral protein translation at late time of infection. Modulates the RNase activity of the virion host shutoff protein ORF17 probably to ensure necessary levels of key cellular mRNAs and proteins. Plays a role in microtubule reorganization that occurs after viral infection by stabilizing microtubule network. Plays a role in the inhibition of host innate immune system by targeting the CGAS enzymatic activity which is the principal cytosolic DNA sensor that detects invading viral DNA. Acts by mediating disruption of liquid-like droplets in which CGAS is activated, thereby preventing CGAS activity. In Homo sapiens (Human), this protein is Tegument protein VP22.